An 802-amino-acid polypeptide reads, in one-letter code: Phenylalanine--tRNA ligase beta subunit (802 aa).

Positions R40 to R149 constitute a tRNA-binding domain. One can recognise a B5 domain in the interval H407–V484. 4 residues coordinate Mg(2+): D462, D468, E471, and E472. One can recognise an FDX-ACB domain in the interval S710–R802.

It belongs to the phenylalanyl-tRNA synthetase beta subunit family. Type 1 subfamily. In terms of assembly, tetramer of two alpha and two beta subunits. It depends on Mg(2+) as a cofactor.

It is found in the cytoplasm. It carries out the reaction tRNA(Phe) + L-phenylalanine + ATP = L-phenylalanyl-tRNA(Phe) + AMP + diphosphate + H(+). This Leptospira borgpetersenii serovar Hardjo-bovis (strain L550) protein is Phenylalanine--tRNA ligase beta subunit.